The sequence spans 459 residues: DPEYAIKETDLLALFRCTPQPGVDPVEAAAALAGESSTATWTVVWTDLLTACDLYRAKAYRVDPVPSAADTYFCYIAYDIDLFEEGSLANLTASIIGNIFGFKAVKALRLEDMRMPYALLKTYQGPATGLVVERERLDKFGRPLLGATVKPKLGLSGKNYGRVVFEGLKGGLDFLKDDENINSQPFMRYRERFLYSMEGVNHAAAMTGEVKGHYLNTTGATMEDMYERADFAKELGSVIVMIDLVIGYTAIQSMAKWSRKTDMILHLHRAGNSTYSRQKTHGMNFRVICKWMRMSGVDHIHAGTVVGKLEGDPLMIKGFYNTLLDFKTDVNLPQGLFFAQDWASLRKCVPVASGGIHCGQMHQLINYLGDDVVLQFGGGTIGHPDGIQAGATANRVALEAMVIARNEGRDYISEGPQILRDAAKTCGPLQTALDLWKDITFNYASTDTADFVETPTANV.

2 residues coordinate substrate: Asn-98 and Thr-148. Lys-150 serves as the catalytic Proton acceptor. Substrate is bound at residue Lys-152. Residues Lys-176, Asp-178, and Glu-179 each coordinate Mg(2+). Residue Lys-176 is modified to N6-carboxylysine. His-268 (proton acceptor) is an active-site residue. Residues Arg-269, His-301, and Ser-353 each coordinate substrate.

Belongs to the RuBisCO large chain family. Type I subfamily. In terms of assembly, heterohexadecamer of 8 large chains and 8 small chains. Mg(2+) is required as a cofactor.

Its subcellular location is the plastid. It is found in the chloroplast. The enzyme catalyses 2 (2R)-3-phosphoglycerate + 2 H(+) = D-ribulose 1,5-bisphosphate + CO2 + H2O. It carries out the reaction D-ribulose 1,5-bisphosphate + O2 = 2-phosphoglycolate + (2R)-3-phosphoglycerate + 2 H(+). Functionally, ruBisCO catalyzes two reactions: the carboxylation of D-ribulose 1,5-bisphosphate, the primary event in carbon dioxide fixation, as well as the oxidative fragmentation of the pentose substrate in the photorespiration process. Both reactions occur simultaneously and in competition at the same active site. In Calyptrosphaera sphaeroidea, this protein is Ribulose bisphosphate carboxylase large chain (rbcL).